Reading from the N-terminus, the 686-residue chain is Rhophilin-2 (686 aa).

One can recognise an REM-1 domain in the interval 26-100 (NPLAQTGRSK…LEGLNISVGV (75 aa)). Residues 46–66 (QILKAVRMRTGAENLLKVATN) are interaction with Rho. The region spanning 111-460 (PLIPLGLKET…RLTYAQHQEE (350 aa)) is the BRO1 domain. The region spanning 515-593 (RSIRFTAEEG…DEIEMKVVSL (79 aa)) is the PDZ domain. Position 655 is a phosphothreonine (Thr-655).

This sequence belongs to the RHPN family. Interacts with GTP-bound RhoA and RhoB. Interacts with both GTP- and GDP-bound RhoA. According to PubMed:12473120, it does not interact with RhoA. Interacts with KRT18. In terms of tissue distribution, widely expressed. Highly expressed in prostate, trachea, stomach, colon, thyroid and pancreas. Expressed at lower level in brain, spinal cord, kidney, placenta and liver.

It is found in the cytoplasm. The protein localises to the perinuclear region. Its function is as follows. Binds specifically to GTP-Rho. May function in a Rho pathway to limit stress fiber formation and/or increase the turnover of F-actin structures in the absence of high levels of RhoA activity. The chain is Rhophilin-2 (RHPN2) from Homo sapiens (Human).